Consider the following 304-residue polypeptide: GTPase Era (304 aa).

Residues 11–186 (YCGFIAIVGR…LRKGVHHFPE (176 aa)) form the Era-type G domain. The segment at 19-26 (GRPNVGKS) is G1. Residue 19-26 (GRPNVGKS) coordinates GTP. The G2 stretch occupies residues 45–49 (QTTRH). Residues 66-69 (DTPG) form a G3 region. Residues 66–70 (DTPGL) and 128–131 (NKVD) contribute to the GTP site. The interval 128-131 (NKVD) is G4. The tract at residues 158 to 160 (ISA) is G5. A KH type-2 domain is found at 210-287 (TGEELPYSVT…HLELWVKVKS (78 aa)).

This sequence belongs to the TRAFAC class TrmE-Era-EngA-EngB-Septin-like GTPase superfamily. Era GTPase family. Monomer.

Its subcellular location is the cytoplasm. The protein resides in the cell inner membrane. Its function is as follows. An essential GTPase that binds both GDP and GTP, with rapid nucleotide exchange. Plays a role in 16S rRNA processing and 30S ribosomal subunit biogenesis and possibly also in cell cycle regulation and energy metabolism. In Histophilus somni (strain 2336) (Haemophilus somnus), this protein is GTPase Era.